The chain runs to 1070 residues: Carbamoyl phosphate synthase large chain (1070 aa).

Positions Met1–Asp399 are carboxyphosphate synthetic domain. Residues Arg129, Arg169, Gly175, Gly176, Glu208, Val210, Glu215, Gly241, Val242, His243, Gln284, and Glu296 each coordinate ATP. Residues Lys133 to Ile325 form the ATP-grasp 1 domain. Residues Gln284, Glu296, and Asn298 each contribute to the Mg(2+) site. Mn(2+) is bound by residues Gln284, Glu296, and Asn298. The tract at residues Ile400–Thr540 is oligomerization domain. A carbamoyl phosphate synthetic domain region spans residues Asn541 to Leu931. The ATP-grasp 2 domain occupies Tyr672 to Ala863. ATP contacts are provided by Arg708, Asp747, Leu749, Glu754, Gly779, Val780, His781, Ser782, Gln822, and Glu834. 3 residues coordinate Mg(2+): Gln822, Glu834, and Asn836. Residues Gln822, Glu834, and Asn836 each coordinate Mn(2+). Residues Asn930–Leu1070 form the MGS-like domain. The interval Leu932–Leu1070 is allosteric domain.

Belongs to the CarB family. In terms of assembly, composed of two chains; the small (or glutamine) chain promotes the hydrolysis of glutamine to ammonia, which is used by the large (or ammonia) chain to synthesize carbamoyl phosphate. Tetramer of heterodimers (alpha,beta)4. Requires Mg(2+) as cofactor. Mn(2+) is required as a cofactor.

It catalyses the reaction hydrogencarbonate + L-glutamine + 2 ATP + H2O = carbamoyl phosphate + L-glutamate + 2 ADP + phosphate + 2 H(+). It carries out the reaction hydrogencarbonate + NH4(+) + 2 ATP = carbamoyl phosphate + 2 ADP + phosphate + 2 H(+). It functions in the pathway amino-acid biosynthesis; L-arginine biosynthesis; carbamoyl phosphate from bicarbonate: step 1/1. The protein operates within pyrimidine metabolism; UMP biosynthesis via de novo pathway; (S)-dihydroorotate from bicarbonate: step 1/3. Its function is as follows. Large subunit of the glutamine-dependent carbamoyl phosphate synthetase (CPSase). CPSase catalyzes the formation of carbamoyl phosphate from the ammonia moiety of glutamine, carbonate, and phosphate donated by ATP, constituting the first step of 2 biosynthetic pathways, one leading to arginine and/or urea and the other to pyrimidine nucleotides. The large subunit (synthetase) binds the substrates ammonia (free or transferred from glutamine from the small subunit), hydrogencarbonate and ATP and carries out an ATP-coupled ligase reaction, activating hydrogencarbonate by forming carboxy phosphate which reacts with ammonia to form carbamoyl phosphate. This chain is Carbamoyl phosphate synthase large chain, found in Methanosarcina acetivorans (strain ATCC 35395 / DSM 2834 / JCM 12185 / C2A).